Consider the following 97-residue polypeptide: Protein YukE (97 aa).

Positions 21–94 (VESQEVLNQV…ESTDQDIANQ (74 aa)) form a coiled coil.

It belongs to the WXG100 family. sagEsxA-like subfamily. In terms of assembly, homodimer.

It is found in the secreted. Its function is as follows. Required to deliver LXG toxins to target cells. This chain is Protein YukE (yukE), found in Bacillus subtilis (strain 168).